The chain runs to 272 residues: Shikimate dehydrogenase (NADP(+)) (272 aa).

Shikimate is bound by residues 14–16 (SKS) and threonine 61. Lysine 65 acts as the Proton acceptor in catalysis. Glutamate 77 is a binding site for NADP(+). 2 residues coordinate shikimate: asparagine 86 and aspartate 102. Residues 126-130 (GAGGA), 149-154 (NRTVSR), and methionine 213 contribute to the NADP(+) site. Tyrosine 215 is a binding site for shikimate. Glycine 237 provides a ligand contact to NADP(+).

It belongs to the shikimate dehydrogenase family. As to quaternary structure, homodimer.

It catalyses the reaction shikimate + NADP(+) = 3-dehydroshikimate + NADPH + H(+). The protein operates within metabolic intermediate biosynthesis; chorismate biosynthesis; chorismate from D-erythrose 4-phosphate and phosphoenolpyruvate: step 4/7. Functionally, involved in the biosynthesis of the chorismate, which leads to the biosynthesis of aromatic amino acids. Catalyzes the reversible NADPH linked reduction of 3-dehydroshikimate (DHSA) to yield shikimate (SA). The polypeptide is Shikimate dehydrogenase (NADP(+)) (Escherichia coli O81 (strain ED1a)).